Consider the following 90-residue polypeptide: Bombyxin B-9 (90 aa).

An N-terminal signal peptide occupies residues 1–20 (MMKTAVMFILVVVISLTYSS). Disulfide bonds link cysteine 30-cysteine 75, cysteine 42-cysteine 88, and cysteine 74-cysteine 79. Positions 49–64 (GGAQYAPYWQETYLRS) are cleaved as a propeptide — c peptide like.

This sequence belongs to the insulin family. In terms of assembly, heterodimer of a B chain and an A chain linked by two disulfide bonds.

It localises to the secreted. In terms of biological role, brain peptide responsible for activation of prothoracic glands to produce ecdysone in insects. The protein is Bombyxin B-9 (BBXB9) of Bombyx mori (Silk moth).